A 187-amino-acid polypeptide reads, in one-letter code: Oligoribonuclease (187 aa).

An Exonuclease domain is found at 7–170 (LIWIDLEMTG…DDIKDSINEL (164 aa)). The active site involves tyrosine 128.

This sequence belongs to the oligoribonuclease family.

It is found in the cytoplasm. Functionally, 3'-to-5' exoribonuclease specific for small oligoribonucleotides. This Legionella pneumophila (strain Paris) protein is Oligoribonuclease.